The primary structure comprises 198 residues: TM2 domain-containing protein 2 (198 aa).

A signal peptide spans 1-27 (MRWPVPPLGYLLLGGQGLLLTFSLISS). Over 28 to 128 (QNNTSPVTYP…FLRGNRPCIK (101 aa)) the chain is Extracellular. 3 N-linked (GlcNAc...) asparagine glycosylation sites follow: asparagine 29, asparagine 40, and asparagine 76. Residues 129–149 (YTGHYFITTLLYSFFLGCFGV) form a helical membrane-spanning segment. Positions 131 to 179 (GHYFITTLLYSFFLGCFGVDRFCLGHTGTAVGKLLTWGGLGIWWFVDLI) constitute a TM2 domain. Residues 150–166 (DRFCLGHTGTAVGKLLT) lie on the Cytoplasmic side of the membrane. The chain crosses the membrane as a helical span at residues 167–187 (WGGLGIWWFVDLILLITGGLM). The Extracellular portion of the chain corresponds to 188–198 (PSDNSNWCTIY).

The protein belongs to the TM2 family.

It localises to the membrane. The polypeptide is TM2 domain-containing protein 2 (tm2d2) (Xenopus laevis (African clawed frog)).